A 309-amino-acid polypeptide reads, in one-letter code: Glutamyl-Q tRNA(Asp) synthetase (309 aa).

L-glutamate-binding positions include 8–12 (RFSPS) and Glu44. The 'HIGH' region signature appears at 11–21 (PSPTGPLHAGS). Zn(2+) is bound by residues Cys100, Cys102, Tyr126, and Cys130. 2 residues coordinate L-glutamate: Tyr205 and Arg223. The 'KMSKS' region motif lies at 261–265 (KLSKQ). Lys264 provides a ligand contact to ATP.

This sequence belongs to the class-I aminoacyl-tRNA synthetase family. GluQ subfamily. Zn(2+) serves as cofactor.

Its function is as follows. Catalyzes the tRNA-independent activation of glutamate in presence of ATP and the subsequent transfer of glutamate onto a tRNA(Asp). Glutamate is transferred on the 2-amino-5-(4,5-dihydroxy-2-cyclopenten-1-yl) moiety of the queuosine in the wobble position of the QUC anticodon. This Albidiferax ferrireducens (strain ATCC BAA-621 / DSM 15236 / T118) (Rhodoferax ferrireducens) protein is Glutamyl-Q tRNA(Asp) synthetase.